Consider the following 120-residue polypeptide: NADH-ubiquinone oxidoreductase chain 3 (120 aa).

Transmembrane regions (helical) follow at residues 7–27 (FVYILVLLAISTGLSVILFFL), 62–82 (FYLVAILFLIFDLEITFLFPF), and 89–109 (MTLLSYSLMLIFLIILTIGFI).

The protein belongs to the complex I subunit 3 family.

The protein localises to the mitochondrion membrane. The catalysed reaction is a ubiquinone + NADH + 5 H(+)(in) = a ubiquinol + NAD(+) + 4 H(+)(out). Its function is as follows. Core subunit of the mitochondrial membrane respiratory chain NADH dehydrogenase (Complex I) that is believed to belong to the minimal assembly required for catalysis. Complex I functions in the transfer of electrons from NADH to the respiratory chain. The immediate electron acceptor for the enzyme is believed to be ubiquinone. The chain is NADH-ubiquinone oxidoreductase chain 3 (nad3) from Dictyostelium discoideum (Social amoeba).